An 837-amino-acid chain; its full sequence is Amyloid-beta A4 precursor protein-binding family A member 1 (837 aa).

3 disordered regions span residues 1-93 (MNHL…DTAE), 238-342 (YDER…SKEK), and 358-435 (EEVK…ESRK). The segment covering 23-38 (ESVEADLEHPEVEEEQ) has biased composition (acidic residues). A phosphoserine mark is found at serine 78, serine 242, serine 246, serine 248, serine 263, serine 280, and serine 285. The tract at residues 226–314 (YRQEALGARL…TPAGGRPDSP (89 aa)) is munc-18-1 binding. Over residues 238 to 254 (YDERSDGESDSPEKEAE) the composition is skewed to basic and acidic residues. Threonine 305 carries the phosphothreonine modification. A phosphoserine mark is found at serine 313 and serine 367. Position 370 is a phosphothreonine (threonine 370). An LIN-2/CASK binding region spans residues 373–436 (EPKEPIWVMR…ASTNKESRKS (64 aa)). The segment covering 387–398 (PTRDCDDQRPMD) has biased composition (basic and acidic residues). Residues 399–418 (GDSPSPGSSSPLGAESSSTS) are compositionally biased toward low complexity. Serine 401, serine 403, serine 408, and serine 568 each carry phosphoserine. Residues 457–643 (DGIIFAANYL…LLNTQDMYND (187 aa)) form the PID domain. The interval 626–641 (LSQKEYSDLLNTQDMY) is autoinhibitory helix linker. PDZ domains follow at residues 656-742 (DVFI…IVRC) and 747-822 (TVLI…TMPA).

Part of a multimeric complex containing STXBP1 and STX1A. Interacts with STXBP1. Also part of the brain-specific heterotrimeric complex LIN-10/X11-alpha, LIN-2/CASK, and LIN7. Component of the brain-specific heterotrimeric complex (LIN-10-LIN-2-LIN-7 complex) composed of at least APBA1, CASK, and LIN7, which associates with the motor protein KIF17 to transport vesicles along microtubules. Within the complex, interacts (via PDZ domain) with the motor protein KIF17; the interaction is direct and is required for association of KIF17 with the cargo that is to be transported. Both isoform 1 and isoform 2 bind to the cytoplasmic domain of amyloid protein (APP). Interacts (via PDZ 1 and 2 domains) with FSPB. Isoform 2, but not isoform 1, interacts (via its truncated PID domain) with active, GTP-bound RAB6A and RAB6B. Brain and spinal cord. Isoform 2 is expressed in testis and brain, but not detected in lung, liver or spleen.

Its subcellular location is the cytoplasm. The protein localises to the perinuclear region. The protein resides in the nucleus. It is found in the golgi apparatus. Its function is as follows. Putative function in synaptic vesicle exocytosis by binding to Munc18-1, an essential component of the synaptic vesicle exocytotic machinery. May modulate processing of the amyloid-beta precursor protein (APP) and hence formation of APP-beta. Component of the LIN-10-LIN-2-LIN-7 complex, which associates with the motor protein KIF17 to transport vesicles containing N-methyl-D-aspartate (NMDA) receptor subunit NR2B along microtubules. The protein is Amyloid-beta A4 precursor protein-binding family A member 1 (APBA1) of Homo sapiens (Human).